We begin with the raw amino-acid sequence, 421 residues long: Testin (421 aa).

The PET domain occupies 92-199 (MILTNPVAAK…GDVKLPCEMD (108 aa)). Residues 133-164 (EKQPVAGSEGAQYRKKQLAKQLPAHDQDPSKC) form a disordered region. Over residues 155 to 164 (PAHDQDPSKC) the composition is skewed to basic and acidic residues. 3 consecutive LIM zinc-binding domains span residues 234–297 (YSCY…CDSE), 299–359 (PRCA…NHAV), and 362–421 (QGCH…KMMS).

It belongs to the prickle / espinas / testin family. Interacts via LIM domain 1 with ZYX. Interacts (via LIM domain 3) with ENAH and VASP. Interacts with ALKBH4, talin, actin, alpha-actinin, GRIP1 and PXN. Interacts (via LIM domain 2) with ACTL7A (via N-terminus). Heterodimer with ACTL7A; the heterodimer interacts with ENAH to form a heterotrimer.

It is found in the cytoplasm. The protein localises to the cell junction. The protein resides in the focal adhesion. Its function is as follows. Scaffold protein that may play a role in cell adhesion, cell spreading and in the reorganization of the actin cytoskeleton. Plays a role in the regulation of cell proliferation. May act as a tumor suppressor. The sequence is that of Testin (TES) from Microcebus murinus (Gray mouse lemur).